The sequence spans 164 residues: V-type proton ATPase 16 kDa proteolipid subunit (164 aa).

Residues 1 to 10 are Lumenal-facing; it reads MSDLCPPTAP. The chain crosses the membrane as a helical span at residues 11-31; sequence FFGFMGAAVALIFANLGAAYG. Over 32–53 the chain is Cytoplasmic; the sequence is TAKSGVGVSSMGVMKPDLVMKS. A helical transmembrane segment spans residues 54 to 74; it reads IIPVVMAGVLGIYGLIIAVII. The Lumenal segment spans residues 75–96; that stretch reads GNGVKGPEGGKPQYSSFTGFAH. The helical transmembrane segment at 97–118 threads the bilayer; that stretch reads LAAGLACGLSGMAAGIAIGIVG. Over 119 to 130 the chain is Cytoplasmic; it reads DAGVRASAQQAK. A helical membrane pass occupies residues 131–155; it reads LYVGMVLILIFAEALGLYGLIVGLI. The Lumenal segment spans residues 156-164; that stretch reads LTSKEAPCS.

Belongs to the V-ATPase proteolipid subunit family. As to quaternary structure, V-ATPase is a heteromultimeric enzyme composed of a peripheral catalytic V1 complex (main components: subunits A, B, C, D, E, and F) attached to an integral membrane V0 proton pore complex (main component: the proteolipid protein; which is present as a hexamer that forms the proton-conducting pore).

The protein resides in the vacuole membrane. Its function is as follows. Proton-conducting pore forming subunit of the membrane integral V0 complex of vacuolar ATPase. V-ATPase is responsible for acidifying a variety of intracellular compartments in eukaryotic cells. In Chrysotila carterae (Marine alga), this protein is V-type proton ATPase 16 kDa proteolipid subunit (VAP).